We begin with the raw amino-acid sequence, 190 residues long: Elongation factor P (190 aa).

This sequence belongs to the elongation factor P family.

Its subcellular location is the cytoplasm. The protein operates within protein biosynthesis; polypeptide chain elongation. Functionally, involved in peptide bond synthesis. Stimulates efficient translation and peptide-bond synthesis on native or reconstituted 70S ribosomes in vitro. Probably functions indirectly by altering the affinity of the ribosome for aminoacyl-tRNA, thus increasing their reactivity as acceptors for peptidyl transferase. This Bartonella bacilliformis (strain ATCC 35685 / KC583 / Herrer 020/F12,63) protein is Elongation factor P.